A 485-amino-acid polypeptide reads, in one-letter code: MVHLGPKKPQARKGSMADVPKELMDEIHQLEDMFTVDSETLRKVVKHFIDELNKGLTKKGGNIPMIPGWVMEFPTGKESGNYLAIDLGGTNLRVVLVKLSGNHTFDTTQSKYKLPHDMRTTKHQEELWSFIADSLKDFMVEQELLNTKDTLPLGFTFSYPASQNKINEGILQRWTKGFDIPNVEGHDVVPLLQNEISKRELPIEIVALINDTVGTLIASYYTDPETKMGVIFGTGVNGAFYDVVSDIEKLEGKLADDIPSNSPMAINCEYGSFDNEHLVLPRTKYDVAVDEQSPRPGQQAFEKMTSGYYLGELLRLVLLELNEKGLMLKDQDLSKLKQPYIMDTSYPARIEDDPFENLEDTDDIFQKDFGVKTTLPERKLIRRLCELIGTRAARLAVCGIAAICQKRGYKTGHIAADGSVYNKYPGFKEAAAKGLRDIYGWTGDASKDPITIVPAEDGSGAGAAVIAALSEKRIAEGKSLGIIGA.

In terms of domain architecture, Hexokinase spans 21–468 (KELMDEIHQL…SGAGAAVIAA (448 aa)). Residues 75 to 209 (TGKESGNYLA…ELPIEIVALI (135 aa)) are hexokinase small subdomain. ATP contacts are provided by residues 86 to 91 (DLGGTN) and Lys-111. Substrate contacts are provided by residues Ser-158, 175–176 (TK), 210–211 (ND), and Asn-237. Positions 210–457 (NDTVGTLIAS…DPITIVPAED (248 aa)) are hexokinase large subdomain. At Ser-245 the chain carries Phosphoserine. Glu-269 is a substrate binding site. Ser-272 bears the Phosphoserine mark. Position 302 (Glu-302) interacts with substrate. Residues 307 to 308 (GY), 344 to 348 (TSYPA), and 419 to 423 (SVYNK) contribute to the ATP site.

This sequence belongs to the hexokinase family. In terms of assembly, homodimer.

It catalyses the reaction a D-hexose + ATP = a D-hexose 6-phosphate + ADP + H(+). The enzyme catalyses D-fructose + ATP = D-fructose 6-phosphate + ADP + H(+). It carries out the reaction D-glucose + ATP = D-glucose 6-phosphate + ADP + H(+). It functions in the pathway carbohydrate metabolism; hexose metabolism. The protein operates within carbohydrate degradation; glycolysis; D-glyceraldehyde 3-phosphate and glycerone phosphate from D-glucose: step 1/4. Its activity is regulated as follows. Subject to allosteric control. Substrate inhibition by ATP. In terms of biological role, catalyzes the phosphorylation of hexose, such as D-glucose and D-fructose, to hexose 6-phosphate (D-glucose 6-phosphate and D-fructose 6-phosphate, respectively). Mediates the initial step of glycolysis by catalyzing phosphorylation of D-glucose to D-glucose 6-phosphate. This is Hexokinase-1 (HXK1) from Saccharomyces cerevisiae (strain ATCC 204508 / S288c) (Baker's yeast).